The following is a 117-amino-acid chain: Putative membrane protein insertion efficiency factor (117 aa).

Belongs to the UPF0161 family.

The protein localises to the cell inner membrane. Its function is as follows. Could be involved in insertion of integral membrane proteins into the membrane. The protein is Putative membrane protein insertion efficiency factor of Bartonella quintana (strain Toulouse) (Rochalimaea quintana).